The sequence spans 345 residues: MNIMRTAMLLAFMTALFMGVGYLVGGSNGMVIALLMAGGLNFFSYWNSDKIVLRMYGAREVDQHSSPVYYKIVSDLARRASLPQPKVYIIDNAQPNAFATGRNPQNAAVAASTGLLNQLSAEEVAGVMAHELAHIEHRDTLTMTLTATIAGAISMLGNFAFFMGGQRHSSENSHSTGAIGGLLALFVAPFAAMLVQMAISRTREYAADRRGAEICGNPLWLASALSKIAGGGHTVYNEEAEHNPATAHMFIINPLRGEGADSLFSTHPATANRIAALRRQAEEMKGARVENMGWNEKIGLHKKSSDFRDLNSGAQTSVFNEESTVQRIKKRPSWLRYGDSKRPRS.

Helical transmembrane passes span 6 to 26 (TAML…LVGG) and 27 to 47 (SNGM…SYWN). His-130 serves as a coordination point for Zn(2+). The active site involves Glu-131. Position 134 (His-134) interacts with Zn(2+). Transmembrane regions (helical) follow at residues 145-165 (LTAT…FMGG) and 179-199 (IGGL…QMAI). Glu-204 provides a ligand contact to Zn(2+).

It belongs to the peptidase M48B family. The cofactor is Zn(2+).

It is found in the cell inner membrane. In Bartonella henselae (strain ATCC 49882 / DSM 28221 / CCUG 30454 / Houston 1) (Rochalimaea henselae), this protein is Protease HtpX homolog.